The primary structure comprises 260 residues: DNA repair protein RecO (260 aa).

Belongs to the RecO family.

Its function is as follows. Involved in DNA repair and RecF pathway recombination. The sequence is that of DNA repair protein RecO from Chlorobaculum parvum (strain DSM 263 / NCIMB 8327) (Chlorobium vibrioforme subsp. thiosulfatophilum).